A 250-amino-acid polypeptide reads, in one-letter code: 1-(5-phosphoribosyl)-5-[(5-phosphoribosylamino)methylideneamino] imidazole-4-carboxamide isomerase (250 aa).

The active-site Proton acceptor is the Asp-8. The active-site Proton donor is the Asp-131.

The protein belongs to the HisA/HisF family.

It is found in the cytoplasm. The enzyme catalyses 1-(5-phospho-beta-D-ribosyl)-5-[(5-phospho-beta-D-ribosylamino)methylideneamino]imidazole-4-carboxamide = 5-[(5-phospho-1-deoxy-D-ribulos-1-ylimino)methylamino]-1-(5-phospho-beta-D-ribosyl)imidazole-4-carboxamide. Its pathway is amino-acid biosynthesis; L-histidine biosynthesis; L-histidine from 5-phospho-alpha-D-ribose 1-diphosphate: step 4/9. In Paraburkholderia xenovorans (strain LB400), this protein is 1-(5-phosphoribosyl)-5-[(5-phosphoribosylamino)methylideneamino] imidazole-4-carboxamide isomerase.